The chain runs to 381 residues: Cytochrome b (381 aa).

A run of 4 helical transmembrane segments spans residues 34-54, 78-99, 114-134, and 179-199; these read FGSL…FLAM, WLIR…YLHI, WNIG…GYVL, and FFAF…IHLL. His84 and His98 together coordinate heme b. 2 residues coordinate heme b: His183 and His197. His202 is a binding site for a ubiquinone. The next 4 membrane-spanning stretches (helical) occupy residues 227 to 247, 289 to 309, 321 to 341, and 348 to 368; these read YKDL…ALFM, LGGV…PLLH, LTQI…WIGG, and FITV…IIMP.

This sequence belongs to the cytochrome b family. The cytochrome bc1 complex contains 3 respiratory subunits (MT-CYB, CYC1 and UQCRFS1), 2 core proteins (UQCRC1 and UQCRC2) and probably 6 low-molecular weight proteins. Requires heme b as cofactor.

It localises to the mitochondrion inner membrane. Functionally, component of the ubiquinol-cytochrome c reductase complex (complex III or cytochrome b-c1 complex) that is part of the mitochondrial respiratory chain. The b-c1 complex mediates electron transfer from ubiquinol to cytochrome c. Contributes to the generation of a proton gradient across the mitochondrial membrane that is then used for ATP synthesis. The polypeptide is Cytochrome b (mt-cyb) (Sphyrna lewini (Scalloped hammerhead shark)).